A 152-amino-acid polypeptide reads, in one-letter code: Keratin, high-sulfur matrix protein, B2C (152 aa).

Ala2 is subject to N-acetylalanine. 3 consecutive repeats follow at residues 27–36 (STCSQTSCCQ), 37–46 (PTSIQTSCCQ), and 47–56 (PTCLQTSGCE).

The keratin products of mammalian epidermal derivatives such as wool and hair consist of microfibrils embedded in a rigid matrix of other proteins. The matrix proteins include the high-sulfur and high-tyrosine keratins, having molecular weights of 6-20 kDa, whereas the microfibrils contain the larger, low-sulfur keratins (40-56 kDa). The protein is Keratin, high-sulfur matrix protein, B2C of Ovis aries (Sheep).